A 316-amino-acid polypeptide reads, in one-letter code: Beta-ketoacyl-[acyl-carrier-protein] synthase III (316 aa).

Active-site residues include C112 and H243. An ACP-binding region spans residues 244-248; sequence QANLR. N273 is an active-site residue.

It belongs to the thiolase-like superfamily. FabH family. As to quaternary structure, homodimer.

The protein resides in the cytoplasm. The enzyme catalyses malonyl-[ACP] + acetyl-CoA + H(+) = 3-oxobutanoyl-[ACP] + CO2 + CoA. It participates in lipid metabolism; fatty acid biosynthesis. Catalyzes the condensation reaction of fatty acid synthesis by the addition to an acyl acceptor of two carbons from malonyl-ACP. Catalyzes the first condensation reaction which initiates fatty acid synthesis and may therefore play a role in governing the total rate of fatty acid production. Possesses both acetoacetyl-ACP synthase and acetyl transacylase activities. Its substrate specificity determines the biosynthesis of branched-chain and/or straight-chain of fatty acids. The chain is Beta-ketoacyl-[acyl-carrier-protein] synthase III from Yersinia pseudotuberculosis serotype O:1b (strain IP 31758).